The primary structure comprises 155 residues: MLKQVEIFTDGSCLGNPGPGGYGAIMRYGKHEKIFSAGFRLTTNNRMEMMAAIVALEALTQPCAVVLSTDSQYVRQGITSWIHNWKKRGWKTTDKKPVKNVDLWKRLDAALSHHDITWKWVKGHAGHVENERCDELARNAAGNPTLDDVGYTSEA.

One can recognise an RNase H type-1 domain in the interval 1–142 (MLKQVEIFTD…CDELARNAAG (142 aa)). The Mg(2+) site is built by Asp-10, Glu-48, Asp-70, and Asp-134.

This sequence belongs to the RNase H family. In terms of assembly, monomer. It depends on Mg(2+) as a cofactor.

The protein localises to the cytoplasm. It catalyses the reaction Endonucleolytic cleavage to 5'-phosphomonoester.. Endonuclease that specifically degrades the RNA of RNA-DNA hybrids. The sequence is that of Ribonuclease H from Erwinia tasmaniensis (strain DSM 17950 / CFBP 7177 / CIP 109463 / NCPPB 4357 / Et1/99).